The following is a 309-amino-acid chain: NAD kinase (309 aa).

The Proton acceptor role is filled by D89. NAD(+)-binding positions include 89–90, 163–164, H174, R191, D193, and 204–209; these read DG, NE, and TAYALS.

Belongs to the NAD kinase family. The cofactor is a divalent metal cation.

The protein localises to the cytoplasm. The enzyme catalyses NAD(+) + ATP = ADP + NADP(+) + H(+). Its function is as follows. Involved in the regulation of the intracellular balance of NAD and NADP, and is a key enzyme in the biosynthesis of NADP. Catalyzes specifically the phosphorylation on 2'-hydroxyl of the adenosine moiety of NAD to yield NADP. The polypeptide is NAD kinase (Shewanella sp. (strain W3-18-1)).